The primary structure comprises 428 residues: MLDIRLFRNEPDTVKSKIELRGDDPKVVDEILELDEQRRKLISATEEMKARRNKVSEEIALKKRNKENADDVIAEMRTLGDDIKEKDSQLNEIDSKMTGILCRIPNLISDDVPQGESDEDNVEVKKWGTPREFSFEPKAHWDIVEELKMADFDRAAKVSGARFVYLTNEGAQLERALMNYMITKHTTQHGYTEMMVPQLVNADTMYGTGQLPKFEEDLFKVEKEGLYTIPTAEVPLTNFYRNEIIQPGVLPEKFTGQSACFRSEAGSAGRDTRGLIRLHQFDKVEMVRFEQPEDSWNALEEMTTNAEAILEELGLPYRRVILCTGDIGFSASKTYDLEVWLPSYNDYKEISSCSNCTDFQARRANIRFKRDKAAKPELAHTLNGSGLAVGRTFAAIVENYQNEDGTVTIPEALVPFMGGKTQISKPVK.

Position 231–233 (231–233 (TAE)) interacts with L-serine. Residue 262–264 (RSE) participates in ATP binding. Glu-285 is an L-serine binding site. 349-352 (EISS) contributes to the ATP binding site. Ser-385 provides a ligand contact to L-serine.

It belongs to the class-II aminoacyl-tRNA synthetase family. Type-1 seryl-tRNA synthetase subfamily. As to quaternary structure, homodimer. The tRNA molecule binds across the dimer.

It is found in the cytoplasm. The catalysed reaction is tRNA(Ser) + L-serine + ATP = L-seryl-tRNA(Ser) + AMP + diphosphate + H(+). The enzyme catalyses tRNA(Sec) + L-serine + ATP = L-seryl-tRNA(Sec) + AMP + diphosphate + H(+). It participates in aminoacyl-tRNA biosynthesis; selenocysteinyl-tRNA(Sec) biosynthesis; L-seryl-tRNA(Sec) from L-serine and tRNA(Sec): step 1/1. Functionally, catalyzes the attachment of serine to tRNA(Ser). Is also able to aminoacylate tRNA(Sec) with serine, to form the misacylated tRNA L-seryl-tRNA(Sec), which will be further converted into selenocysteinyl-tRNA(Sec). The protein is Serine--tRNA ligase of Staphylococcus aureus (strain MRSA252).